Reading from the N-terminus, the 543-residue chain is EH domain-containing protein 2 (543 aa).

At Ser-3 the chain carries Phosphoserine. The Dynamin-type G domain occupies 55–286 (FDGKPMVLVA…DLFRDIQGLP (232 aa)). Positions 65 to 72 (GQYSTGKT) are G1 motif. 65-72 (GQYSTGKT) contributes to the ATP binding site. The tract at residues 91–92 (EP) is G2 motif. The KPF loop; caveolar targeting signature appears at 120 to 122 (KPF). Positions 153–156 (DTPG) are G3 motif. The segment at 219–222 (NKAD) is G4 motif. Lys-220 contributes to the ATP binding site. Val-243 is a region of interest (G5 motif). Trp-258 contributes to the ATP binding site. Residues 320-340 (SVFGKENKKKQLILKLPVIFA) form a mediates membrane-binding region. Residues Ser-438, Ser-468, Ser-470, Ser-484, and Ser-493 each carry the phosphoserine modification. Residues 449-537 (DKSKYDEIFY…RRLVPPSKRR (89 aa)) enclose the EH domain. Residues 481-516 (LPNSVLGRIWKLSDVDRDGMLDDEEFALASHLIEAK) enclose the EF-hand domain. Residues Asp-494, Asp-496, Asp-498, Met-500, and Glu-505 each contribute to the Ca(2+) site. The segment at 523–543 (PANLPRRLVPPSKRRHKGSAE) is disordered. Basic residues predominate over residues 534-543 (SKRRHKGSAE).

Belongs to the TRAFAC class dynamin-like GTPase superfamily. Dynamin/Fzo/YdjA family. EHD subfamily. In terms of assembly, homodimer and homooligomer. Interacts with EHD1. May also interact with EHD3 and EHD4. Interacts with MYOF. Interacts with EHBP1. Interacts with FER1L5 (via second C2 domain). Interacts with CAV1 in a cholesterol-dependent manner. Interacts (via EH domain) with PACSIN2 (via NPF motifs); this interaction probably stabilizes the caveolae. As to expression, highly expressed in heart and moderately expressed in placenta, lung, and skeletal muscle.

Its subcellular location is the cell membrane. The protein resides in the membrane. It localises to the caveola. The protein localises to the endosome membrane. It is found in the cytoplasm. Its subcellular location is the cytosol. Its activity is regulated as follows. The very low intrinsic ATPase activity is increased upon interaction with liposomes. ATP- and membrane-binding protein that controls membrane reorganization/tubulation upon ATP hydrolysis. Plays a role in membrane trafficking between the plasma membrane and endosomes. Important for the internalization of GLUT4. Required for fusion of myoblasts to skeletal muscle myotubes. Required for normal translocation of FER1L5 to the plasma membrane. Regulates the equilibrium between cell surface-associated and cell surface-dissociated caveolae by constraining caveolae at the cell membrane. The sequence is that of EH domain-containing protein 2 from Homo sapiens (Human).